The sequence spans 752 residues: Complement C2 (752 aa).

The N-terminal stretch at 1 to 20 (MGPLMVLFCLLFVYTGLADS) is a signal peptide. Sushi domains lie at 22-86 (PSCP…VCKP), 87-146 (VRCP…VCDN), and 149-206 (GHCP…ICRQ). 6 disulfides stabilise this stretch: Cys-24–Cys-64, Cys-51–Cys-84, Cys-89–Cys-131, Cys-117–Cys-144, Cys-151–Cys-191, and Cys-177–Cys-204. An N-linked (GlcNAc...) asparagine glycan is attached at Asn-29. The N-linked (GlcNAc...) asparagine glycan is linked to Asn-112. The VWFA domain maps to 254 to 452 (NLYLLLDCSQ…KALHQVFEHM (199 aa)). An MIDAS-like motif motif is present at residues 260–264 (DCSQS). Mg(2+)-binding residues include Ser-262 and Ser-264. N-linked (GlcNAc...) asparagine glycans are attached at residues Asn-290 and Asn-333. Thr-337 lines the Mg(2+) pocket. Intrachain disulfides connect Cys-463–Cys-581, Cys-492–Cys-508, and Cys-584–Cys-600. The region spanning 464–744 (GVGNMSANAS…MQPWLRQHLG (281 aa)) is the Peptidase S1 domain. Asn-467 and Asn-471 each carry an N-linked (GlcNAc...) asparagine glycan. Residues His-507 and Asp-561 each act as charge relay system in the active site. Residues Asn-621 and Asn-651 are each glycosylated (N-linked (GlcNAc...) asparagine). Disulfide bonds link Cys-638–Cys-665 and Cys-675–Cys-705. The active-site Charge relay system is the Ser-679.

The protein belongs to the peptidase S1 family. As to quaternary structure, serine protease component of the C3 convertase, also named C4bC2b, composed of the serine protease complement C2b and complement C4b. Serine protease component of the C5 convertase, also named C4bC2bC3b, composed of the serine protease complement C2b, complement C3b, as well as complement C4b. Mg(2+) serves as cofactor. It depends on Mn(2+) as a cofactor. Post-translationally, cleaved and activated by different proteases depending on the complement pathway to generate complement C2a and serine protease complement C2b chains. Cleaved and activated by C1S following activation by the classical complement system. Cleaved and activated by MASP2 following activation by the lectin complement system. Cleaved and activated by GZMK following activation by the GZMK complement system.

It is found in the secreted. It localises to the cell surface. It catalyses the reaction Selective cleavage of Arg-|-Ser bond in complement component C3 alpha-chain to form C3a and C3b, and Arg-|-Xaa bond in complement component C5 alpha-chain to form C5a and C5b.. Precursor of the catalytic component of the C3 and C5 convertase complexes, which are part of the complement pathway, a cascade of proteins that leads to phagocytosis and breakdown of pathogens and signaling that strengthens the adaptive immune system. Component C2 is part of the classical, lectin and GZMK complement systems. In terms of biological role, catalytic component of the complement C3 and C5 convertase complexes. Following complement activation, recruited to the surface of pathogens by complement C4b opsonin to form the C3 convertase, or C3b and C4b opsonins to form the C5 convertase. As part of the C3 convertase, cleaves and activate C3 into C3a anaphylatoxin and C3b opsonin, the next components of the complement pathways. As part of the C5 convertase, cleaves and activate C5 into C5a anaphylatoxin and C5b component of the membrane attack complex. The protein is Complement C2 of Gorilla gorilla gorilla (Western lowland gorilla).